A 371-amino-acid polypeptide reads, in one-letter code: Homeobox protein Nkx-2.1 (371 aa).

The segment at residues R161–A220 is a DNA-binding region (homeobox). Disordered regions lie at residues Q219–A294 and G310–A339. Residues S233–G243 are compositionally biased toward gly residues. Residues C244–Q253 show a composition bias toward low complexity. S254 is modified (phosphoserine). Residues A272 to A294 are compositionally biased toward low complexity.

The protein belongs to the NK-2 homeobox family. As to quaternary structure, interacts with WWTR1. In terms of processing, phosphorylated on serine residues by STK3/MST2. Thyroid and lung.

It is found in the nucleus. Transcription factor that binds and activates the promoter of thyroid specific genes such as thyroglobulin, thyroperoxidase, and thyrotropin receptor. Crucial in the maintenance of the thyroid differentiation phenotype. May play a role in lung development and surfactant homeostasis. Forms a regulatory loop with GRHL2 that coordinates lung epithelial cell morphogenesis and differentiation. Activates the transcription of GNRHR and plays a role in enhancing the circadian oscillation of its gene expression. Represses the transcription of the circadian transcriptional repressor NR1D1. The polypeptide is Homeobox protein Nkx-2.1 (Homo sapiens (Human)).